Consider the following 159-residue polypeptide: Globin C, coelomic (159 aa).

Gly2 bears the N-acetylglycine mark. Residues 12 to 158 (DLTLAQKKIV…VQAVLLVKHG (147 aa)) enclose the Globin domain. Residues His74 and His105 each coordinate heme b.

The protein belongs to the globin family. In terms of assembly, monomer.

The chain is Globin C, coelomic from Molpadia arenicola (Sea cucumber).